The sequence spans 152 residues: MWFPQIIAGMAAGGAASAMTPGKVLFTNALGLGCSRSRGLFLEMFGTAVLCFTVLMTAVEKRETNFMAALPIGISLFMAHMALTGYTGTGVNPARSLGAAVAARYFPHYHWIYWISPLLGAFLAWSVWQLLQILDYTTYVNAEKAAGQKKED.

At 1-5 (MWFPQ) the chain is on the cytoplasmic side. Residues 6-26 (IIAGMAAGGAASAMTPGKVLF) traverse the membrane as a helical segment. Topologically, residues 27–38 (TNALGLGCSRSR) are extracellular. The chain crosses the membrane as a helical span at residues 39–59 (GLFLEMFGTAVLCFTVLMTAV). Topologically, residues 60–65 (EKRETN) are cytoplasmic. Residues 66–86 (FMAALPIGISLFMAHMALTGY) form a helical membrane-spanning segment. Over 87–110 (TGTGVNPARSLGAAVAARYFPHYH) the chain is Extracellular. The NPA signature appears at 92–94 (NPA). Residues 111 to 131 (WIYWISPLLGAFLAWSVWQLL) traverse the membrane as a helical segment. Over 132-152 (QILDYTTYVNAEKAAGQKKED) the chain is Cytoplasmic.

Belongs to the MIP/aquaporin (TC 1.A.8) family.

The protein localises to the membrane. This is an uncharacterized protein from Saccharomyces cerevisiae (strain YJM789) (Baker's yeast).